Reading from the N-terminus, the 1239-residue chain is Structural polyprotein (1239 aa).

Residues 1 to 35 (MFPYPTLNYPPMAPINPMAYRDPNPPRQVAPFRPP) are necessary for nucleocapsid assembly and virus assembly. Residues 1–101 (MFPYPTLNYP…RKPKPGKRQR (101 aa)) form a disordered region. A compositionally biased stretch (pro residues) spans 23–34 (PNPPRQVAPFRP). A host transcription inhibition region spans residues 36-69 (LAAQIEDLRRSIANLTLKQRAPNPPAGPPAKRKK). The Supraphysiological nuclear export signal signature appears at 43-50 (LRRSIANL). Asn-49 is a glycosylation site (N-linked (GlcNAc...) asparagine; by host). The short motif at 66–69 (KRKK) is the Nuclear localization signal element. A compositionally biased stretch (basic residues) spans 79–101 (KKKRPPPPAKKQKRKPKPGKRQR). Residues 81–111 (KRPPPPAKKQKRKPKPGKRQRMCMKLESDKT) form a binding to the viral RNA region. Positions 96 to 110 (PGKRQRMCMKLESDK) are ribosome-binding. Ser-108 is subject to Phosphoserine. The 150-residue stretch at 110-259 (KTFPIMLNGQ…KDTPEGSEPW (150 aa)) folds into the Peptidase S3 domain. Thr-111 bears the Phosphothreonine mark. His-136 (charge relay system) is an active-site residue. The tract at residues 152 to 157 (KKASIY) is interaction with spike glycoprotein E2. Catalysis depends on charge relay system residues Asp-158 and Ser-210. The tract at residues 244 to 248 (QKGVT) is interaction with spike glycoprotein E2. Residues 260-271 (SLATVMCVLANI) are functions as an uncleaved signal peptide for the precursor of protein E3/E2. Topologically, residues 260–681 (SLATVMCVLA…HVVVVYYYNR (422 aa)) are extracellular. Disulfide bonds link Cys-266/Cys-275, Cys-280/Cys-284, Cys-283/Cys-315, Cys-341/Cys-444, Cys-344/Cys-349, Cys-411/Cys-425, Cys-472/Cys-585, Cys-521/Cys-545, and Cys-523/Cys-539. An N-linked (GlcNAc...) asparagine; by host glycan is attached at Asn-270. An N-linked (GlcNAc...) asparagine; by host glycan is attached at Asn-637. Residues 682–702 (YPLTTIIGLCTCVAIIMVSCD) form a helical membrane-spanning segment. The Cytoplasmic segment spans residues 703–742 (HPCGSFSGLRNLCITPYKLAPNAQVPILLALLCCIKPTRA). Cys-705 carries S-palmitoyl cysteine; by host lipidation. The interval 710–714 (GLRNL) is interaction with the capsid protein. A transient transmembrane before p62-6K protein processing region spans residues 714–734 (LCITPYKLAPNAQVPILLALL). Residues Cys-715, Cys-735, and Cys-736 are each lipidated (S-palmitoyl cysteine; by host). A disulfide bridge links Cys-715 with Cys-736. The Extracellular portion of the chain corresponds to 743 to 754 (DDTLQVLNYLWN). The chain crosses the membrane as a helical span at residues 755–775 (NNQNFFWMQTLIPLAALIVCM). Arg-776 is a topological domain (cytoplasmic). Residues 777–797 (MLAALFCCGPAFLLVCGAWAA) traverse the membrane as a helical segment. The Extracellular portion of the chain corresponds to 798–1215 (AYEHTAVMPN…WSWLKVLVGG (418 aa)). 4 disulfides stabilise this stretch: Cys-847–Cys-912, Cys-860–Cys-892, Cys-861–Cys-894, and Cys-866–Cys-876. The E1 fusion peptide loop stretch occupies residues 882–899 (VYPFMWGGAYCFCDTENT). N-linked (GlcNAc...) asparagine; by host glycosylation is found at Asn-932 and Asn-1069. Disulfide bonds link Cys-1058-Cys-1070, Cys-1100-Cys-1175, and Cys-1105-Cys-1179. A helical membrane pass occupies residues 1216–1236 (TSAFIVLGLIATAVVALVLFF). At 1237 to 1239 (HRH) the chain is on the cytoplasmic side.

In terms of assembly, homodimer. Homomultimer. Interacts with host karyopherin KPNA4; this interaction allows the nuclear import of the viral capsid protein. Interacts with spike glycoprotein E2. Interacts with host IRAK1; the interaction leads to inhibition of IRAK1-dependent signaling. Part of a tetrameric complex composed of host CRM1, host importin alpha/beta dimer and the viral capsid; this complex blocks the receptor-mediated transport through the nuclear pore. Interacts with host phosphatase PPP1CA; this interaction dephosphorylates the capsid protein, which increases its ability to bind to the viral genome. The precursor of protein E3/E2 and E1 form a heterodimer shortly after synthesis. As to quaternary structure, the precursor of protein E3/E2 and E1 form a heterodimer shortly after synthesis. Processing of the precursor of protein E3/E2 into E2 and E3 results in a heterodimer of the spike glycoproteins E2 and E1. Spike at virion surface are constituted of three E2-E1 heterodimers. After target cell attachment and endocytosis, E1 change conformation to form homotrimers. E2-E1 heterodimers interact with host VLDLR or LRP8/APOER2 to mediate viral entry. Interacts with 6K protein. In terms of assembly, interacts with spike glycoprotein E1. Processing of the precursor of protein E3/E2 into E2 and E3 results in a heterodimer of the spike glycoproteins E2 and E1. Spike at virion surface are constituted of a trimer of E2-E1 heterodimers. Interacts with 6K protein. E2-E1 heterodimers interact with host VLDLR or LRP8/APOER2 to mediate viral entry. Interacts (via E2-A) with host VLDLR (via class A repeats); this interaction mediates viral entry into host cell. Interacts with host LRP8/APOER2 (via class A repeats); this interaction mediates viral entry into host cell. Oligomer. Interacts with spike glycoprotein E1. Interacts with spike glycoprotein E2. In terms of processing, structural polyprotein: Specific enzymatic cleavages in vivo yield mature proteins. Capsid protein is auto-cleaved during polyprotein translation, unmasking a signal peptide at the N-terminus of the precursor of E3/E2. The remaining polyprotein is then targeted to the host endoplasmic reticulum, where host signal peptidase cleaves it into pE2, 6K and E1 proteins. pE2 is further processed to mature E3 and E2 by host furin in trans-Golgi vesicle. Post-translationally, phosphorylated on serine and threonine residues. Palmitoylated via thioester bonds. These palmitoylations may induce disruption of the C-terminus transmembrane. This would result in the reorientation of E2 C-terminus from lumenal to cytoplasmic side. In terms of processing, N-glycosylated. Post-translationally, palmitoylated via thioester bonds.

The protein resides in the virion. The protein localises to the host cytoplasm. It is found in the host cell membrane. It localises to the host nucleus. Its subcellular location is the virion membrane. The protein resides in the host Golgi apparatus. The protein localises to the host trans-Golgi network. It is found in the host endoplasmic reticulum. The enzyme catalyses Autocatalytic release of the core protein from the N-terminus of the togavirus structural polyprotein by hydrolysis of a -Trp-|-Ser- bond.. Forms an icosahedral capsid with a T=4 symmetry composed of 240 copies of the capsid protein surrounded by a lipid membrane through which penetrate 80 spikes composed of trimers of E1-E2 heterodimers. The capsid protein binds to the viral RNA genome at a site adjacent to a ribosome binding site for viral genome translation following genome release. Possesses a protease activity that results in its autocatalytic cleavage from the nascent structural protein. Following its self-cleavage, the capsid protein transiently associates with ribosomes, and within several minutes the protein binds to viral RNA and rapidly assembles into icosahedric core particles. The resulting nucleocapsid eventually associates with the cytoplasmic domain of the spike glycoprotein E2 at the cell membrane, leading to budding and formation of mature virions. In case of infection, new virions attach to target cells and after clathrin-mediated endocytosis their membrane fuses with the host endosomal membrane. This leads to the release of the nucleocapsid into the cytoplasm, followed by an uncoating event necessary for the genomic RNA to become accessible. The uncoating might be triggered by the interaction of capsid proteins with ribosomes. Binding of ribosomes would release the genomic RNA since the same region is genomic RNA-binding and ribosome-binding. Specifically inhibits interleukin-1 receptor-associated kinase 1/IRAK1-dependent signaling during viral entry, representing a means by which the alphaviruses may evade innate immune detection and activation prior to viral gene expression. Inhibits host transcription. Forms a tetrameric complex with XPO1/CRM1 and the nuclear import receptor importin. This complex blocks the central channel of host nuclear pores thereby inhibiting the receptor-mediated nuclear transport and thus the host mRNA and rRNA transcription. The inhibition of transcription is linked to a cytopathic effect on the host cell. Functionally, provides the signal sequence for the translocation of the precursor of protein E3/E2 to the host endoplasmic reticulum. Furin-cleaved E3 remains associated with spike glycoprotein E1 and mediates pH protection of the latter during the transport via the secretory pathway. After virion release from the host cell, the assembly protein E3 is gradually released in the extracellular space. Its function is as follows. Plays a role in viral attachment to target host cell, by binding to the cell receptors VLDLR or LRP8/APOER2. Synthesized as a p62 precursor which is processed by furin at the cell membrane just before virion budding, giving rise to E2-E1 heterodimer. The p62-E1 heterodimer is stable, whereas E2-E1 is unstable and dissociate at low pH. p62 is processed at the last step, presumably to avoid E1 fusion activation before its final export to cell surface. E2 C-terminus contains a transitory transmembrane that would be disrupted by palmitoylation, resulting in reorientation of the C-terminal tail from lumenal to cytoplasmic side. This step is critical since E2 C-terminus is involved in budding by interacting with capsid proteins. This release of E2 C-terminus in cytoplasm occurs lately in protein export, and precludes premature assembly of particles at the endoplasmic reticulum membrane. In terms of biological role, acts as a viroporin that participates in virus glycoprotein processing and transport to the plasma membrane, cell permeabilization and budding of viral particles. Disrupts the calcium homeostasis of the cell, probably at the endoplasmic reticulum level. This leads to cytoplasmic calcium elevation. Because of its lipophilic properties, the 6K protein is postulated to influence the selection of lipids that interact with the transmembrane domains of the glycoproteins, which, in turn, affects the deformability of the bilayer required for the extreme curvature that occurs as budding proceeds. Present in low amount in virions, about 3% compared to viral glycoproteins. Class II viral fusion protein. Fusion activity is inactive as long as E1 is bound to E2 in mature virion. After virus attachment to target cell via host VLDLR or LRP8/APOER2 and endocytosis, acidification of the endosome induces dissociation of E1/E2 heterodimer and concomitant trimerization of the E1 subunits. This E1 trimer is fusion active, and promotes release of viral nucleocapsid in cytoplasm after endosome and viral membrane fusion. Efficient fusion requires the presence of cholesterol and sphingolipid in the target membrane. In Aedes (Human), this protein is Structural polyprotein.